Consider the following 144-residue polypeptide: IgW chain C region, secreted form 1/3 (144 aa).

Residues 1-82 (VYNQTTAVLG…AGSRFNDRIS (82 aa)) enclose the Ig-like domain. N-linked (GlcNAc...) asparagine glycosylation is found at Asn3, Asn43, and Asn123. Cys11 and Cys68 are oxidised to a cystine. The secretory tail stretch occupies residues 87-144 (KGGTINLPVPGGNTPCTCPPCSCSGCMPKLVYQTDLNVTLENGGQLQYNCHQQACKIK).

In terms of tissue distribution, expressed mainly in lymphoid tissues including spleen, epigonal organ and circulating lymphocytes.

The protein localises to the secreted. The protein is IgW chain C region, secreted form 1/3 of Heterodontus francisci (Horn shark).